A 278-amino-acid polypeptide reads, in one-letter code: MNSQKVQALTTVSKLSPIDKVVKGRNIPFSMPGDRVIMLKISSLFKFGREDKESDSKFDLVPTDCGICMVKTQLNQDEQKRTTFNDGKVIEIITYEQMKDILPMIKQAIHEFYSWRRGLMDTSTLEARNEWKPVSQLDFRRCNSNLIFYISILILSEYIIEIPIEYLTVSYGGYNFNNIRTGEWFNTDDFNNYQKVIKSGDVCDLFLINDTGEYKYINAITHVTKTNMIFSFNMQVSRPPQLNTTMKVRQTLSENKKQKSSSTSPETDSDMSEFFGDN.

The segment at Thr-251–Asn-278 is disordered.

This is an uncharacterized protein from Aedes pseudoscutellaris reovirus (isolate France) (ApRV).